The following is a 211-amino-acid chain: Minor capsid protein VP2 (211 aa).

The protein belongs to the norovirus VP2 family. In terms of assembly, homooligomer. The portal-like structure consists in 12 copies of VP2. Interacts with capsid protein VP1.

The protein resides in the virion. It is found in the host cytoplasm. Its function is as follows. Minor structural protein that forms a portal-like structure at a unique three-fold axis of symmetry, following binding to the host receptor. The channel formed by VP2 may allow the delivery of the viral genome through the host endosomal membrane. This Homo sapiens (Human) protein is Minor capsid protein VP2.